The chain runs to 223 residues: Ribose-5-phosphate isomerase A (223 aa).

Residues 26-29 (TGST), 82-85 (DGAD), and 95-98 (KGGG) each bind substrate. Glu104 functions as the Proton acceptor in the catalytic mechanism. Residue Lys122 coordinates substrate.

Belongs to the ribose 5-phosphate isomerase family. Homodimer.

It carries out the reaction aldehydo-D-ribose 5-phosphate = D-ribulose 5-phosphate. The protein operates within carbohydrate degradation; pentose phosphate pathway; D-ribose 5-phosphate from D-ribulose 5-phosphate (non-oxidative stage): step 1/1. Functionally, catalyzes the reversible conversion of ribose-5-phosphate to ribulose 5-phosphate. This chain is Ribose-5-phosphate isomerase A, found in Streptococcus agalactiae serotype Ia (strain ATCC 27591 / A909 / CDC SS700).